Consider the following 107-residue polypeptide: MAQKIKKGDTVQVISGKDKGKRGEVIQVLPKEEKLIVRGVNIVKRHQRPTGQMRQGGIIEKEAPLYWSKVMLVCPSCDKATRVGFRVLEDGSKVRYCKKCGEIIDKK.

The protein belongs to the universal ribosomal protein uL24 family. Part of the 50S ribosomal subunit.

Functionally, one of two assembly initiator proteins, it binds directly to the 5'-end of the 23S rRNA, where it nucleates assembly of the 50S subunit. One of the proteins that surrounds the polypeptide exit tunnel on the outside of the subunit. This is Large ribosomal subunit protein uL24 from Fervidobacterium nodosum (strain ATCC 35602 / DSM 5306 / Rt17-B1).